The chain runs to 548 residues: Glucose-6-phosphate isomerase (548 aa).

Glu355 (proton donor) is an active-site residue. Active-site residues include His386 and Lys514.

The protein belongs to the GPI family.

Its subcellular location is the cytoplasm. The enzyme catalyses alpha-D-glucose 6-phosphate = beta-D-fructose 6-phosphate. The protein operates within carbohydrate biosynthesis; gluconeogenesis. It functions in the pathway carbohydrate degradation; glycolysis; D-glyceraldehyde 3-phosphate and glycerone phosphate from D-glucose: step 2/4. Its function is as follows. Catalyzes the reversible isomerization of glucose-6-phosphate to fructose-6-phosphate. The protein is Glucose-6-phosphate isomerase of Yersinia pestis (strain Pestoides F).